The sequence spans 1381 residues: Hepatocyte growth factor receptor (1381 aa).

A signal peptide spans 1–24 (MKAPTVLTPGILVLLFILVQRSNG). Topologically, residues 25-932 (ECKEALTKSE…VIVQPDQNFT (908 aa)) are extracellular. The region spanning 27–515 (KEALTKSEMN…TGKKITKIPL (489 aa)) is the Sema domain. N45 carries N-linked (GlcNAc...) asparagine glycosylation. Cystine bridges form between C95-C101, C98-C160, C133-C141, and C172-C175. N106 is a glycosylation site (N-linked (GlcNAc...) asparagine). N-linked (GlcNAc...) asparagine glycosylation occurs at N149. A glycan (N-linked (GlcNAc...) asparagine) is linked at N202. Intrachain disulfides connect C298/C363 and C385/C397. N399 is a glycosylation site (N-linked (GlcNAc...) asparagine). 4 disulfides stabilise this stretch: C520/C538, C526/C561, C529/C545, and C541/C551. IPT/TIG domains follow at residues 563-655 (PTIY…FSYV), 657-739 (PIIT…FSYR), and 742-836 (PIVY…LIYV). An O-linked (Man) threonine glycan is attached at T582. N-linked (GlcNAc...) asparagine glycans are attached at residues N607 and N635. T676 and T761 each carry an O-linked (Man) threonine glycan. N-linked (GlcNAc...) asparagine glycans are attached at residues N785, N879, and N930. The chain crosses the membrane as a helical span at residues 933–955 (GLIAGVVSISIALLLLLGLFLWL). The Cytoplasmic segment spans residues 956–1381 (KKRKQIKDLG…QDNADGEVDT (426 aa)). Position 966 is a phosphoserine (S966). A Phosphothreonine modification is found at T977. A phosphoserine mark is found at S990, S997, and S1000. At Y1003 the chain carries Phosphotyrosine. Residues 1078–1345 (VHFNEVIGRG…RISAIFSAFI (268 aa)) form the Protein kinase domain. ATP-binding positions include 1084–1092 (IGRGHFGCV) and K1110. The active-site Proton acceptor is the D1204. Positions 1212–1381 (LDEKFTVKVA…QDNADGEVDT (170 aa)) are interaction with RANBP9. Y1230 carries the phosphotyrosine modification. Residues Y1234 and Y1235 each carry the phosphotyrosine; by autocatalysis modification. A Phosphothreonine modification is found at T1289. The interval 1320–1359 (WHPKAEMRPSFSELVSRISAIFSAFIGEHYVHVNATYVNV) is interaction with MUC20. Y1349 and Y1356 each carry phosphotyrosine; by autocatalysis. Position 1365 is a phosphotyrosine (Y1365).

The protein belongs to the protein kinase superfamily. Tyr protein kinase family. Heterodimer made of an alpha chain (50 kDa) and a beta chain (145 kDa) which are disulfide linked. Binds PLXNB1. Interacts when phosphorylated with downstream effectors including STAT3, PIK3R1, SRC, PCLG1, GRB2 and GAB1. Interacts with SPSB1, SPSB2 and SPSB4. Interacts with INPP5D/SHIP1. When phosphorylated at Tyr-1356, interacts with INPPL1/SHIP2. Interacts with RANBP9 and RANBP10, as well as SPSB1, SPSB2, SPSB3 and SPSB4. SPSB1 binding occurs in the presence and in the absence of HGF, however HGF treatment has a positive effect on this interaction. Interacts with MUC20; prevents interaction with GRB2 and suppresses hepatocyte growth factor-induced cell proliferation. Interacts with GRB10. Interacts with PTPN1 and PTPN2. Interacts with tensin TNS3. Interacts (when phosphorylated) with tensin TNS4 (via SH2 domain); the interaction increases MET protein stability by inhibiting MET endocytosis and subsequent lysosomal degradation. In terms of processing, autophosphorylated in response to ligand binding on Tyr-1234 and Tyr-1235 in the kinase domain leading to further phosphorylation of Tyr-1349 and Tyr-1356 in the C-terminal multifunctional docking site. Dephosphorylated by PTPRJ at Tyr-1349 and Tyr-1365. Dephosphorylated by PTPN1 and PTPN2. Ubiquitinated. Ubiquitination by CBL regulates the receptor stability and activity through proteasomal degradation. Post-translationally, O-mannosylation of IPT/TIG domains by TMEM260 is required for protein maturation. O-mannosylated residues are composed of single mannose glycans that are not elongated or modified.

Its subcellular location is the membrane. It carries out the reaction L-tyrosyl-[protein] + ATP = O-phospho-L-tyrosyl-[protein] + ADP + H(+). Its activity is regulated as follows. In its inactive state, the C-terminal tail interacts with the catalytic domain and inhibits the kinase activity. Upon ligand binding, the C-terminal tail is displaced and becomes phosphorylated, thus increasing the kinase activity. Functionally, receptor tyrosine kinase that transduces signals from the extracellular matrix into the cytoplasm by binding to hepatocyte growth factor/HGF ligand. Regulates many physiological processes including proliferation, scattering, morphogenesis and survival. Ligand binding at the cell surface induces autophosphorylation of MET on its intracellular domain that provides docking sites for downstream signaling molecules. Following activation by ligand, interacts with the PI3-kinase subunit PIK3R1, PLCG1, SRC, GRB2, STAT3 or the adapter GAB1. Recruitment of these downstream effectors by MET leads to the activation of several signaling cascades including the RAS-ERK, PI3 kinase-AKT, or PLCgamma-PKC. The RAS-ERK activation is associated with the morphogenetic effects while PI3K/AKT coordinates prosurvival effects. During embryonic development, MET signaling plays a role in gastrulation, development and migration of muscles and neuronal precursors, angiogenesis and kidney formation. In adults, participates in wound healing as well as organ regeneration and tissue remodeling. Also promotes differentiation and proliferation of hematopoietic cells. The protein is Hepatocyte growth factor receptor (MET) of Ateles geoffroyi (Black-handed spider monkey).